We begin with the raw amino-acid sequence, 287 residues long: Large ribosomal subunit protein uL2 (287 aa).

Positions leucine 203 to serine 287 are disordered. Basic residues-rich tracts occupy residues glycine 209–valine 220 and lysine 258–serine 287.

Belongs to the universal ribosomal protein uL2 family. As to quaternary structure, part of the 50S ribosomal subunit. Forms a bridge to the 30S subunit in the 70S ribosome.

Its function is as follows. One of the primary rRNA binding proteins. Required for association of the 30S and 50S subunits to form the 70S ribosome, for tRNA binding and peptide bond formation. It has been suggested to have peptidyltransferase activity; this is somewhat controversial. Makes several contacts with the 16S rRNA in the 70S ribosome. The chain is Large ribosomal subunit protein uL2 from Nostoc sp. (strain PCC 7120 / SAG 25.82 / UTEX 2576).